The following is a 766-amino-acid chain: Single-minded homolog 1 (766 aa).

The 53-residue stretch at methionine 1 to arginine 53 folds into the bHLH domain. 2 consecutive PAS domains span residues glycine 77 to histidine 147 and proline 218 to glycine 288. One can recognise a PAC domain in the interval threonine 292 to threonine 335. The Single-minded C-terminal domain maps to glutamate 336–serine 766. Residues alanine 353–threonine 365 are compositionally biased toward polar residues. Disordered stretches follow at residues alanine 353–aspartate 431, tryptophan 528–lysine 563, and serine 642–asparagine 662. The short motif at arginine 368–tyrosine 387 is the Nuclear localization signal element. A compositionally biased stretch (low complexity) spans serine 373 to serine 385. Residues histidine 394–serine 404 show a composition bias toward basic and acidic residues. Residues aspartate 649–asparagine 662 show a composition bias toward polar residues.

In terms of assembly, efficient DNA binding requires dimerization with another bHLH protein. Heterodimer; forms a heterodimer with ARNT, ARNT2.

The protein localises to the nucleus. In terms of biological role, transcriptional factor that may have pleiotropic effects during embryogenesis and in the adult. The chain is Single-minded homolog 1 (SIM1) from Pan troglodytes (Chimpanzee).